Here is a 208-residue protein sequence, read N- to C-terminus: V-type ATP synthase subunit D (208 aa).

The protein belongs to the V-ATPase D subunit family.

Produces ATP from ADP in the presence of a proton gradient across the membrane. This chain is V-type ATP synthase subunit D, found in Chlamydia felis (strain Fe/C-56) (Chlamydophila felis).